We begin with the raw amino-acid sequence, 388 residues long: MNLHEYQAKQIFAQYRLPVSKGIVCHSLDDAVSAIHTLAGDTWAAKCQVHAGGRGKAGGVKLVRSEAEIREFCNQWLGQRLVTFQTDKNGQPVNTIYLEETCLIERELYLGAVIDRSSQKIVFMASNAGGMNIEDVAAQTPELIHKATIDPLTGAQAFQGRELAFKLGLSGDQIKQFAHLFVQLAKLFIEKDLALLEVNPLVLTKQGQLLCLDAKMVIDSNALYRHPELKALQDPSQEDAREADAAKWDLNYVALDGNIGCMVNGAGLAMGTMDIVKLHGGRPANFLDVGGGATKERVSEAFKLILSDQNVKAVLVNIFGGIVRCDLIAEGIIAAVNEVGINIPVIVRLEGTNAELGREILANSGLRLIAANTLTQAAQLAVKAAEGK.

ATP contacts are provided by residues Lys-46, 53–55 (GRG), Glu-99, Cys-102, and Glu-107. Mg(2+) is bound by residues Asn-199 and Asp-213. Substrate is bound by residues Asn-264 and 321–323 (GIV).

Belongs to the succinate/malate CoA ligase beta subunit family. As to quaternary structure, heterotetramer of two alpha and two beta subunits. It depends on Mg(2+) as a cofactor.

The enzyme catalyses succinate + ATP + CoA = succinyl-CoA + ADP + phosphate. It carries out the reaction GTP + succinate + CoA = succinyl-CoA + GDP + phosphate. It functions in the pathway carbohydrate metabolism; tricarboxylic acid cycle; succinate from succinyl-CoA (ligase route): step 1/1. Succinyl-CoA synthetase functions in the citric acid cycle (TCA), coupling the hydrolysis of succinyl-CoA to the synthesis of either ATP or GTP and thus represents the only step of substrate-level phosphorylation in the TCA. The beta subunit provides nucleotide specificity of the enzyme and binds the substrate succinate, while the binding sites for coenzyme A and phosphate are found in the alpha subunit. This Actinobacillus pleuropneumoniae serotype 5b (strain L20) protein is Succinate--CoA ligase [ADP-forming] subunit beta.